The sequence spans 225 residues: MYSIKTDHKLMPRERLIRLGPEKLSNQELLAILLRTGNKEKHVLELSAYLLSSLDSLADLKKFSLQELQRLSGIGKVKAIEIKAMLELADRIQIAGQAVAAPVLSSAQVAEKMMIELGDKQQEHLVAIYLDSQNKIIEEKTIFIGTVRKSIAEPREILYYACKNMATSLIVVHNHPSGLTKPSANDYHFTEKIKRSCDYLGLICLDHIIVSKHGYYSFREKSDLF.

The 123-residue stretch at 102-224 (PVLSSAQVAE…YYSFREKSDL (123 aa)) folds into the MPN domain. Residues histidine 173, histidine 175, and aspartate 186 each coordinate Zn(2+). The short motif at 173-186 (HNHPSGLTKPSAND) is the JAMM motif element.

It belongs to the UPF0758 family.

The polypeptide is UPF0758 protein Sez_1052 (Streptococcus equi subsp. zooepidemicus (strain MGCS10565)).